The sequence spans 70 residues: Brevinin-1S (70 aa).

The first 22 residues, 1 to 22 (MFTLKKSLLLLFFLGTINLSLC), serve as a signal peptide directing secretion. Positions 23 to 44 (EEERNAEEERRDDPEERDVEVE) are excised as a propeptide. C64 and C70 are joined by a disulfide.

Belongs to the frog skin active peptide (FSAP) family. Brevinin subfamily. As to expression, expressed by the skin glands.

The protein resides in the secreted. Antimicrobial peptide. The sequence is that of Brevinin-1S from Odorrana schmackeri (Schmacker's frog).